The following is a 336-amino-acid chain: Ferredoxin--NADP reductase (336 aa).

FAD is bound by residues threonine 18, glutamate 37, glutamine 45, tyrosine 50, valine 92, phenylalanine 127, aspartate 290, and serine 331.

The protein belongs to the ferredoxin--NADP reductase type 2 family. Homodimer. Requires FAD as cofactor.

It catalyses the reaction 2 reduced [2Fe-2S]-[ferredoxin] + NADP(+) + H(+) = 2 oxidized [2Fe-2S]-[ferredoxin] + NADPH. In Symbiobacterium thermophilum (strain DSM 24528 / JCM 14929 / IAM 14863 / T), this protein is Ferredoxin--NADP reductase.